The sequence spans 520 residues: GMP synthase [glutamine-hydrolyzing] (520 aa).

In terms of domain architecture, Glutamine amidotransferase type-1 spans 9 to 202; sequence TVLIVDFGSQ…VHKIAGIKGD (194 aa). Cysteine 86 functions as the Nucleophile in the catalytic mechanism. Catalysis depends on residues histidine 176 and glutamate 178. One can recognise a GMPS ATP-PPase domain in the interval 203-395; sequence WTMSAYRAKA…LGLPESFIGR (193 aa). Residue 230 to 236 participates in ATP binding; that stretch reads SGGVDSS.

As to quaternary structure, homodimer.

The catalysed reaction is XMP + L-glutamine + ATP + H2O = GMP + L-glutamate + AMP + diphosphate + 2 H(+). Its pathway is purine metabolism; GMP biosynthesis; GMP from XMP (L-Gln route): step 1/1. In terms of biological role, catalyzes the synthesis of GMP from XMP. The protein is GMP synthase [glutamine-hydrolyzing] of Sinorhizobium fredii (strain NBRC 101917 / NGR234).